The sequence spans 319 residues: Cytochrome f (319 aa).

The signal sequence occupies residues 1-34 (MQNRNTYDLKKKMTRLISVLVMIHIITRTSISNA). Residues Tyr-35, Cys-55, Cys-58, and His-59 each contribute to the heme site. A helical membrane pass occupies residues 285–304 (VKGLLLFLASVILAQIFLVL).

The protein belongs to the cytochrome f family. As to quaternary structure, the 4 large subunits of the cytochrome b6-f complex are cytochrome b6, subunit IV (17 kDa polypeptide, petD), cytochrome f and the Rieske protein, while the 4 small subunits are PetG, PetL, PetM and PetN. The complex functions as a dimer. Heme serves as cofactor.

The protein resides in the plastid. The protein localises to the chloroplast thylakoid membrane. In terms of biological role, component of the cytochrome b6-f complex, which mediates electron transfer between photosystem II (PSII) and photosystem I (PSI), cyclic electron flow around PSI, and state transitions. The sequence is that of Cytochrome f (petA) from Picea abies (Norway spruce).